A 217-amino-acid polypeptide reads, in one-letter code: Adenylate kinase (217 aa).

Residue 10–15 coordinates ATP; sequence GAGKGT. Residues 30–59 are NMP; the sequence is STGDIFRANIKNNTELGAKAKEYMDQGLLV. AMP contacts are provided by residues T31, R36, 57–59, 85–88, and Q92; these read LLV and GFPR. The tract at residues 126–163 is LID; sequence GRRACVSCGGTYHVVFTPTKKEGICDACGGELTIRDDD. R127 is a binding site for ATP. Positions 130 and 133 each coordinate Zn(2+). 136–137 contacts ATP; the sequence is TY. Positions 150 and 153 each coordinate Zn(2+). AMP is bound by residues R160 and R171. K199 is an ATP binding site.

This sequence belongs to the adenylate kinase family. In terms of assembly, monomer.

Its subcellular location is the cytoplasm. It catalyses the reaction AMP + ATP = 2 ADP. It functions in the pathway purine metabolism; AMP biosynthesis via salvage pathway; AMP from ADP: step 1/1. In terms of biological role, catalyzes the reversible transfer of the terminal phosphate group between ATP and AMP. Plays an important role in cellular energy homeostasis and in adenine nucleotide metabolism. The sequence is that of Adenylate kinase from Lachnoclostridium phytofermentans (strain ATCC 700394 / DSM 18823 / ISDg) (Clostridium phytofermentans).